The following is a 1837-amino-acid chain: AF4/FMR2 family member lilli (1837 aa).

9 disordered regions span residues 1–25 (MAQQQQQQQHHHHLQHQQQQQQQQQ), 65–109 (NLYS…PRRL), 162–295 (IQQQ…LHNG), 455–592 (QQLP…KKKY), 605–712 (TGLL…PGNV), 797–852 (PKSQ…LQIP), 868–1250 (NNMQ…GGAK), 1267–1311 (QQQQ…GLAS), and 1344–1466 (APSS…DPML). Positions 16-25 (HQQQQQQQQQ) are enriched in low complexity. The segment covering 84 to 109 (REKYERQQGIQSDDRETSLFSEPRRL) has biased composition (basic and acidic residues). Low complexity-rich tracts occupy residues 162 to 179 (IQQQVSSSISSSASVASS), 187 to 200 (QTQQQQQQQQQQQQ), and 247 to 264 (NSNSSSITNNAAASSSSS). Thr468 is subject to Phosphothreonine. Over residues 475 to 488 (LKIEKNPILEKQDS) the composition is skewed to basic and acidic residues. The segment covering 490–500 (LENDLELSESE) has biased composition (acidic residues). A phosphoserine mark is found at Ser497 and Ser499. Low complexity-rich tracts occupy residues 509 to 529 (SPGSSSNGSESDSTESGSESS) and 542 to 552 (QQQQQTQQQQL). Over residues 553 to 563 (HGHHPQSHHHQ) the composition is skewed to basic residues. The span at 564-583 (QFLQQQLQRQQQQQQQQQQL) shows a compositional bias: low complexity. Composition is skewed to gly residues over residues 612–633 (GGLGSSSGNNSSGGGGGSGNGG) and 641–673 (GSMGGSGGSSSSGGASGGGGGGGGSGSSSGIGS). Polar residues-rich tracts occupy residues 678–690 (NKTPSPTDSNKWN) and 698–711 (PTSQTSSESVSPGN). The segment covering 815–837 (SESATSGSSSSSCSSSDSAASAS) has biased composition (low complexity). The span at 868–880 (NNMQKSQSMSVTV) shows a compositional bias: polar residues. The span at 892-902 (PRQKKPRKKKM) shows a compositional bias: basic residues. A phosphoserine mark is found at Ser913 and Ser914. Composition is skewed to low complexity over residues 927-951 (VVAQAQAAVVPPPSTNSTTTSATTT) and 961-1013 (QQQQ…SSVL). Residues 952 to 964 (KKGRGRPRKQQQQ) constitute a DNA-binding region (a.T hook). Phosphoserine is present on residues Ser974 and Ser976. The segment covering 1021–1033 (SQSSSNGNTPTKK) has biased composition (polar residues). 4 stretches are compositionally biased toward low complexity: residues 1034–1049 (MSSIPMMPAAAASAAA), 1056–1091 (AVAAANAVAASSSSSDEESSSSSCSTSKSSSSSSSS), 1130–1139 (GSSSPTSSSS), and 1157–1173 (ISNSNSNSNNNVIVNNN). The span at 1174–1184 (LQQQAMPQQSP) shows a compositional bias: polar residues. Residues 1189–1212 (LSGGSQQLSSSDSSSSSSGSSSSS) show a composition bias toward low complexity. The span at 1217–1234 (DAKREKNRERKPKSDKNK) shows a compositional bias: basic and acidic residues. Positions 1267 to 1276 (QQQQQQQQVQ) are enriched in low complexity. Residues 1345–1355 (PSSSNQQNGHL) show a composition bias toward polar residues. Over residues 1373–1386 (KVKHEHHQLHHHSQ) the composition is skewed to basic residues. Basic and acidic residues-rich tracts occupy residues 1393 to 1407 (VKPEPELDSLYETKF) and 1416 to 1432 (FQLKQERDRDRNRERDQ). A Phosphoserine modification is found at Ser1517. The segment covering 1550–1560 (AVQTTPPTSVT) has biased composition (polar residues). Disordered stretches follow at residues 1550–1571 (AVQTTPPTSVTGAGAPASLVSQ) and 1727–1756 (GNTPSSISPSNSVGSQGSGSNTPPGKIVPQ). Over residues 1727 to 1747 (GNTPSSISPSNSVGSQGSGSN) the composition is skewed to low complexity.

This sequence belongs to the AF4 family.

It localises to the nucleus. In terms of biological role, has a role in transcriptional regulation. Acts in parallel with the Ras/MAPK and the PI3K/PKB pathways in the control of cell identity and cellular growth. Essential for regulation of the cytoskeleton and cell growth but not for cell proliferation or growth rate. Required specifically for the microtubule-based basal transport of lipid droplets. Plays a partially redundant function downstream of Raf in cell fate specification in the developing eye. Pair-rule protein that regulates embryonic cellularization, gastrulation and segmentation. The chain is AF4/FMR2 family member lilli from Drosophila willistoni (Fruit fly).